A 679-amino-acid chain; its full sequence is Methionine--tRNA ligase (679 aa).

The short motif at 14 to 24 is the 'HIGH' region element; it reads PYANGSIHLGH. Zn(2+)-binding residues include Cys145, Cys148, Cys158, and Cys161. Positions 331 to 335 match the 'KMSKS' region motif; that stretch reads KMSKS. Lys334 contributes to the ATP binding site. Residues 577–679 enclose the tRNA-binding domain; it reads TFAAVDLRVA…SGAKPGQRIK (103 aa).

It belongs to the class-I aminoacyl-tRNA synthetase family. MetG type 1 subfamily. In terms of assembly, homodimer. Zn(2+) is required as a cofactor.

The protein resides in the cytoplasm. The catalysed reaction is tRNA(Met) + L-methionine + ATP = L-methionyl-tRNA(Met) + AMP + diphosphate. Functionally, is required not only for elongation of protein synthesis but also for the initiation of all mRNA translation through initiator tRNA(fMet) aminoacylation. This Pseudomonas putida (strain ATCC 47054 / DSM 6125 / CFBP 8728 / NCIMB 11950 / KT2440) protein is Methionine--tRNA ligase.